Here is a 270-residue protein sequence, read N- to C-terminus: Flavin-dependent thymidylate synthase (270 aa).

In terms of domain architecture, ThyX spans 13–218 (GFVRLVDQMG…PLAWAAFEEH (206 aa)). FAD contacts are provided by residues S59, 82 to 84 (RHR), and E90. Residues 79–82 (QWFR), 90–94 (EISGR), and R157 each bind dUMP. Positions 82–92 (RHRTASVNEIS) match the ThyX motif motif. FAD is bound by residues 173-175 (DLH) and H179. R184 contacts dUMP. The Involved in ionization of N3 of dUMP, leading to its activation role is filled by R184.

It belongs to the thymidylate synthase ThyX family. As to quaternary structure, homotetramer. The cofactor is FAD.

The catalysed reaction is dUMP + (6R)-5,10-methylene-5,6,7,8-tetrahydrofolate + NADPH + H(+) = dTMP + (6S)-5,6,7,8-tetrahydrofolate + NADP(+). Its pathway is pyrimidine metabolism; dTTP biosynthesis. In terms of biological role, catalyzes the reductive methylation of 2'-deoxyuridine-5'-monophosphate (dUMP) to 2'-deoxythymidine-5'-monophosphate (dTMP) while utilizing 5,10-methylenetetrahydrofolate (mTHF) as the methyl donor, and NADPH and FADH(2) as the reductant. This is Flavin-dependent thymidylate synthase from Thermus thermophilus (strain ATCC BAA-163 / DSM 7039 / HB27).